A 156-amino-acid chain; its full sequence is 6,7-dimethyl-8-ribityllumazine synthase (156 aa).

5-amino-6-(D-ribitylamino)uracil is bound by residues F23, 57-59 (AYE), and 81-83 (AII). Residue 86–87 (GT) participates in (2S)-2-hydroxy-3-oxobutyl phosphate binding. Residue H89 is the Proton donor of the active site. F114 serves as a coordination point for 5-amino-6-(D-ribitylamino)uracil. R128 is a (2S)-2-hydroxy-3-oxobutyl phosphate binding site.

The protein belongs to the DMRL synthase family.

The enzyme catalyses (2S)-2-hydroxy-3-oxobutyl phosphate + 5-amino-6-(D-ribitylamino)uracil = 6,7-dimethyl-8-(1-D-ribityl)lumazine + phosphate + 2 H2O + H(+). It participates in cofactor biosynthesis; riboflavin biosynthesis; riboflavin from 2-hydroxy-3-oxobutyl phosphate and 5-amino-6-(D-ribitylamino)uracil: step 1/2. Catalyzes the formation of 6,7-dimethyl-8-ribityllumazine by condensation of 5-amino-6-(D-ribitylamino)uracil with 3,4-dihydroxy-2-butanone 4-phosphate. This is the penultimate step in the biosynthesis of riboflavin. In Helicobacter pylori (strain ATCC 700392 / 26695) (Campylobacter pylori), this protein is 6,7-dimethyl-8-ribityllumazine synthase.